The chain runs to 407 residues: Chorismate synthase (407 aa).

NADP(+) contacts are provided by arginine 40 and arginine 46. FMN is bound by residues 138–140 (RAS) and 259–260 (QA). A compositionally biased stretch (basic and acidic residues) spans 275–284 (RRGSRAHDEM). Residues 275–308 (RRGSRAHDEMYPGTDGVVRSTNRAGGLEGGMTNG) are disordered. Residues glycine 303, 318–322 (KPIST), and arginine 344 each bind FMN.

It belongs to the chorismate synthase family. As to quaternary structure, homotetramer. The cofactor is FMNH2.

It catalyses the reaction 5-O-(1-carboxyvinyl)-3-phosphoshikimate = chorismate + phosphate. It functions in the pathway metabolic intermediate biosynthesis; chorismate biosynthesis; chorismate from D-erythrose 4-phosphate and phosphoenolpyruvate: step 7/7. In terms of biological role, catalyzes the anti-1,4-elimination of the C-3 phosphate and the C-6 proR hydrogen from 5-enolpyruvylshikimate-3-phosphate (EPSP) to yield chorismate, which is the branch point compound that serves as the starting substrate for the three terminal pathways of aromatic amino acid biosynthesis. This reaction introduces a second double bond into the aromatic ring system. This is Chorismate synthase from Mycobacterium marinum (strain ATCC BAA-535 / M).